The primary structure comprises 294 residues: N-acetylmuramic acid 6-phosphate etherase (294 aa).

Positions 54–217 (VIKSFEEEGR…STASMIGVGK (164 aa)) constitute an SIS domain. The active-site Proton donor is the E82. E113 is an active-site residue.

The protein belongs to the GCKR-like family. MurNAc-6-P etherase subfamily. Homodimer.

The catalysed reaction is N-acetyl-D-muramate 6-phosphate + H2O = N-acetyl-D-glucosamine 6-phosphate + (R)-lactate. Its pathway is amino-sugar metabolism; N-acetylmuramate degradation. Its function is as follows. Specifically catalyzes the cleavage of the D-lactyl ether substituent of MurNAc 6-phosphate, producing GlcNAc 6-phosphate and D-lactate. The sequence is that of N-acetylmuramic acid 6-phosphate etherase from Bacillus cereus (strain B4264).